A 1249-amino-acid polypeptide reads, in one-letter code: Clustered mitochondria protein homolog (1249 aa).

Residues 1 to 32 are disordered; that stretch reads MAQTNGELEHSKETPEQLTNGNHPEETQEEDN. The Clu domain occupies 318–562; that stretch reads DITRSQENYL…RVTPLDVMWQ (245 aa). The span at 605–628 shows a compositional bias: basic and acidic residues; sequence KAEADAAKAESSEATESKEQASEE. Disordered stretches follow at residues 605-636 and 868-903; these read KAEADAAKAESSEATESKEQASEEKSEEDQER and KAPATNGANGVAQEEGKNKKKKKGGDSSSPARAAKE. TPR repeat units follow at residues 974–1007, 1016–1049, and 1058–1091; these read AKLYHQLSMLYYQTDEKEAAVELARKAVIVTERT, ILSYLNLSLFEHASGNTKTALAYIKHAMDLWKII, and ITTMNNAAVMLQHLKQYSDSRKWFEASLEVCESL. Residues 1174–1249 form a disordered region; it reads NMNPRSLGTK…KLRGSKKSSA (76 aa). Residues 1176-1190 are compositionally biased toward polar residues; sequence NPRSLGTKIQPQVGQ.

This sequence belongs to the CLU family. As to quaternary structure, may associate with the eukaryotic translation initiation factor 3 (eIF-3) complex.

It localises to the cytoplasm. Functionally, mRNA-binding protein involved in proper cytoplasmic distribution of mitochondria. The sequence is that of Clustered mitochondria protein homolog from Aspergillus niger (strain ATCC MYA-4892 / CBS 513.88 / FGSC A1513).